The following is an 82-amino-acid chain: Modifier of protein aggregation 4 (82 aa).

Positions 1 to 23 (MTRGNQRDLAREKNQKKLADQKK) are enriched in basic and acidic residues. 2 disordered regions span residues 1–41 (MTRG…MDAR) and 63–82 (EAAAAAANAKKVAKVDPLKM).

The protein belongs to the SERF family.

The protein resides in the cytoplasm. It localises to the cytosol. Its subcellular location is the nucleus. In terms of biological role, positive regulator of protein aggregation and age-related proteotoxicity. Induces conformational changes in aggregation-prone proteins, driving them into compact formations preceding the formation of aggregates. The polypeptide is Modifier of protein aggregation 4 (Caenorhabditis elegans).